The following is a 240-amino-acid chain: Lactate utilization protein C (240 aa).

Belongs to the LutC/YkgG family.

Is involved in L-lactate degradation and allows cells to grow with lactate as the sole carbon source. The sequence is that of Lactate utilization protein C from Geobacillus kaustophilus (strain HTA426).